The following is a 453-amino-acid chain: Luminescence regulatory protein LuxO (453 aa).

Residues 1 to 112 (MVEDTASVAA…RLRVTVNNAI (112 aa)) form the Response regulatory domain. Position 47 is a 4-aspartylphosphate (Asp-47). A Sigma-54 factor interaction domain is found at 133–362 (FIGSSQTMQQ…LQNVLRNIVV (230 aa)). ATP is bound by residues 161–168 (GESGTGKE) and 224–233 (ADGGTLFLDE).

Functionally, acts negatively to control the expression of luminescence. At low cell density, LuxO is phosphorylated, and together with sigma-54, causes repression of the luxCDABEGH operon. This repression could be indirect, LuxO could activate a negative regulator of luminescence. At high cell density, LuxO is dephosphorylated and inactive, therefore the luxCDABEGH operon is not repressed and light is emitted. LuxO and sigma-54 have also a role in activating the production of siderophore and in regulating the rugose colony morphology phenotype. In Vibrio campbellii (strain ATCC BAA-1116), this protein is Luminescence regulatory protein LuxO (luxO).